The sequence spans 381 residues: Dual specificity protein phosphatase 6 (381 aa).

In terms of domain architecture, Rhodanese spans Gly30 to Glu148. The tract at residues Ser176–Gln203 is disordered. Positions Asn189 to Gln203 are enriched in polar residues. The region spanning Phe206–Leu349 is the Tyrosine-protein phosphatase domain. Catalysis depends on Cys293, which acts as the Phosphocysteine intermediate.

It belongs to the protein-tyrosine phosphatase family. Non-receptor class dual specificity subfamily. Interacts with MAPK1/ERK2. Post-translationally, ubiquitinated by the SCF(FBXO31) complex, leading to its proteasomal degradation.

The protein resides in the cytoplasm. The enzyme catalyses O-phospho-L-tyrosyl-[protein] + H2O = L-tyrosyl-[protein] + phosphate. It carries out the reaction O-phospho-L-seryl-[protein] + H2O = L-seryl-[protein] + phosphate. It catalyses the reaction O-phospho-L-threonyl-[protein] + H2O = L-threonyl-[protein] + phosphate. In terms of biological role, dual specificity protein phosphatase, which mediates dephosphorylation and inactivation of MAP kinases. Has a specificity for the ERK family. Plays an important role in alleviating acute postoperative pain. Necessary for the normal dephosphorylation of the long-lasting phosphorylated forms of spinal MAPK1/3 and MAP kinase p38 induced by peripheral surgery, which drives the resolution of acute postoperative allodynia. Also important for dephosphorylation of MAPK1/3 in local wound tissue, which further contributes to resolution of acute pain. This Mus musculus (Mouse) protein is Dual specificity protein phosphatase 6 (Dusp6).